The primary structure comprises 191 residues: Large ribosomal subunit protein uL22 (191 aa).

Residues 159 to 168 (VPKGEDDTAQ) show a composition bias toward basic and acidic residues. Positions 159–191 (VPKGEDDTAQKKKVSQKKLKKQKLKAALSGGAD) are disordered. Residues 169–182 (KKKVSQKKLKKQKL) show a composition bias toward basic residues.

This sequence belongs to the universal ribosomal protein uL22 family.

This chain is Large ribosomal subunit protein uL22 (RPL17), found in Suberites domuncula (Sponge).